A 291-amino-acid polypeptide reads, in one-letter code: MVAVLGGRGVLRLRLLLSALKPGIHVPRAGPAAAFGTSVTSAKVAVNGVQLHYQQTGEGDHAVLLLPGMLGSGETDFGPQLKNLNKKLFTVVAWDPRGYGHSRPPDRDFPADFFERDAKDAVDLMKALKFKKVSLLGWSDGGITALIAAAKYPSYIHKMVIWGANAYVTDEDSMIYEGIRDVSKWSERTRKPLEALYGYDYFARTCEKWVDGIRQFKHLPDGNICRHLLPRVQCPALIVHGEKDPLVPRFHADFIHKHVKGSRLHLMPEGKHNLHLRFADEFNKLAEDFLQ.

The first 37 residues, 1–37 (MVAVLGGRGVLRLRLLLSALKPGIHVPRAGPAAAFGT), serve as a signal peptide directing secretion. The AB hydrolase-1 domain occupies 62–181 (AVLLLPGMLG…DSMIYEGIRD (120 aa)). N6-acetyllysine is present on residues Lys86 and Lys119. Lys126 bears the N6-acetyllysine; alternate mark. Residue Lys126 is modified to N6-succinyllysine; alternate. The active-site Nucleophile is the Ser139. Residue Lys184 is modified to N6-succinyllysine. Position 191 is an N6-acetyllysine; alternate (Lys191). Lys191 carries the N6-succinyllysine; alternate modification. N6-acetyllysine is present on Lys217. Position 221 (Asp221) interacts with Mg(2+). Lys243 is modified (N6-acetyllysine). Asp244 serves as the catalytic Charge relay system. N6-acetyllysine; alternate is present on residues Lys260 and Lys271. N6-succinyllysine; alternate is present on residues Lys260 and Lys271. His272 functions as the Charge relay system in the catalytic mechanism.

It belongs to the AB hydrolase superfamily. Lipase family. In terms of assembly, monomer. May also form homodimers. As to expression, expressed at high levels in liver and kidney and lower levels in heart, intestine and skeletal muscle.

Its subcellular location is the mitochondrion. The enzyme catalyses L-homocysteine thiolactone + H2O = L-homocysteine + H(+). The catalysed reaction is valacyclovir + H2O = acyclovir + L-valine + H(+). In terms of biological role, specific alpha-amino acid ester serine hydrolase that prefers small, hydrophobic, and aromatic side chains and does not have a stringent requirement for the leaving group other than preferring a primary alcohol. Has homocysteine-thiolactonase activity (in vitro) and may play a significant role in the detoxification of homocysteine thiolactone in vivo. Catalyzes the hydrolytic activation of amino acid ester prodrugs of nucleoside analogs such as valacyclovir and valganciclovir, converting them into their active forms (acyclovir and ganciclovir). The chain is Serine hydrolase BPHL (BPHL) from Homo sapiens (Human).